The chain runs to 451 residues: Enolase (451 aa).

A (2R)-2-phosphoglycerate-binding site is contributed by Q163. E205 serves as the catalytic Proton donor. Residues D258, E308, and D335 each contribute to the Mg(2+) site. (2R)-2-phosphoglycerate-binding residues include K360, R389, S390, and K411. The Proton acceptor role is filled by K360.

This sequence belongs to the enolase family. Requires Mg(2+) as cofactor.

It localises to the cytoplasm. The protein resides in the secreted. Its subcellular location is the cell surface. The catalysed reaction is (2R)-2-phosphoglycerate = phosphoenolpyruvate + H2O. The protein operates within carbohydrate degradation; glycolysis; pyruvate from D-glyceraldehyde 3-phosphate: step 4/5. Functionally, catalyzes the reversible conversion of 2-phosphoglycerate (2-PG) into phosphoenolpyruvate (PEP). It is essential for the degradation of carbohydrates via glycolysis. In Mycoplasma mycoides subsp. mycoides SC (strain CCUG 32753 / NCTC 10114 / PG1), this protein is Enolase.